A 394-amino-acid chain; its full sequence is Choline/ethanolamine kinase (394 aa).

Position 2 is an N-acetylalanine (Ala-2). The disordered stretch occupies residues 22 to 42; it reads GLLDAKCPEPIPNRRRSSSLS. ATP contacts are provided by residues 75–81, Arg-104, 146–152, Gln-244, and Asp-264; these read SGGLSNL and QYLPSRP. 77-79 provides a ligand contact to substrate; sequence GLS.

This sequence belongs to the choline/ethanolamine kinase family. Homodimer, and heterodimer with CHKA.

The catalysed reaction is choline + ATP = phosphocholine + ADP + H(+). It carries out the reaction ethanolamine + ATP = phosphoethanolamine + ADP + H(+). Its pathway is phospholipid metabolism; phosphatidylethanolamine biosynthesis; phosphatidylethanolamine from ethanolamine: step 1/3. In terms of biological role, has a key role in phospholipid metabolism, and catalyzes the first step of phosphatidylethanolamine and phosphatidylcholine biosynthesis. This Rattus norvegicus (Rat) protein is Choline/ethanolamine kinase (Chkb).